Here is a 245-residue protein sequence, read N- to C-terminus: Probable membrane transporter protein YdhB (245 aa).

Helical transmembrane passes span 1 to 21, 34 to 56, 71 to 91, 98 to 118, 137 to 157, 177 to 197, 199 to 219, and 225 to 245; these read MLII…GAGG, HIPI…LSGA, LIVG…TSFI, YLTA…LFIL, ILGI…APFI, MLVI…EGFV, YVLL…GAKF, and KVVL…LLLF.

Belongs to the 4-toluene sulfonate uptake permease (TSUP) (TC 2.A.102) family.

It localises to the cell membrane. This chain is Probable membrane transporter protein YdhB (ydhB), found in Bacillus subtilis (strain 168).